The chain runs to 177 residues: Inner membrane-spanning protein YciB (177 aa).

5 helical membrane passes run 22–42, 50–70, 76–96, 121–141, and 151–171; these read IFIASKSLIFISGLTCLLYWI, INLFSFITIAIFGSLTIIFHN, WKITIIYMIFSVILFISQFFM, FFWALFFLFCSILNIYVALCL, and VFGLSFLMFLSILITSIYINF.

The protein belongs to the YciB family.

The protein localises to the cell inner membrane. In terms of biological role, plays a role in cell envelope biogenesis, maintenance of cell envelope integrity and membrane homeostasis. The protein is Inner membrane-spanning protein YciB of Buchnera aphidicola subsp. Schizaphis graminum (strain Sg).